Reading from the N-terminus, the 635-residue chain is Threonine--tRNA ligase (635 aa).

In terms of domain architecture, TGS spans 1 to 61; sequence MIKITLKDGK…HKDSSLEILT (61 aa). The catalytic stretch occupies residues 242 to 532; that stretch reads DHRKLGKELD…LIEQYAGAFP (291 aa). Zn(2+)-binding residues include C333, H384, and H509.

It belongs to the class-II aminoacyl-tRNA synthetase family. In terms of assembly, homodimer. It depends on Zn(2+) as a cofactor.

The protein resides in the cytoplasm. It catalyses the reaction tRNA(Thr) + L-threonine + ATP = L-threonyl-tRNA(Thr) + AMP + diphosphate + H(+). Catalyzes the attachment of threonine to tRNA(Thr) in a two-step reaction: L-threonine is first activated by ATP to form Thr-AMP and then transferred to the acceptor end of tRNA(Thr). Also edits incorrectly charged L-seryl-tRNA(Thr). In Clostridium botulinum (strain Loch Maree / Type A3), this protein is Threonine--tRNA ligase.